A 342-amino-acid polypeptide reads, in one-letter code: Tetraacyldisaccharide 4'-kinase (342 aa).

Residue 68–75 (TVGGTGKT) participates in ATP binding.

Belongs to the LpxK family.

It catalyses the reaction a lipid A disaccharide + ATP = a lipid IVA + ADP + H(+). It functions in the pathway glycolipid biosynthesis; lipid IV(A) biosynthesis; lipid IV(A) from (3R)-3-hydroxytetradecanoyl-[acyl-carrier-protein] and UDP-N-acetyl-alpha-D-glucosamine: step 6/6. Functionally, transfers the gamma-phosphate of ATP to the 4'-position of a tetraacyldisaccharide 1-phosphate intermediate (termed DS-1-P) to form tetraacyldisaccharide 1,4'-bis-phosphate (lipid IVA). The protein is Tetraacyldisaccharide 4'-kinase of Burkholderia multivorans (strain ATCC 17616 / 249).